The sequence spans 244 residues: tRNA pseudouridine synthase A (244 aa).

The active-site Nucleophile is D52. Substrate is bound at residue Y110.

Belongs to the tRNA pseudouridine synthase TruA family. As to quaternary structure, homodimer.

The enzyme catalyses uridine(38/39/40) in tRNA = pseudouridine(38/39/40) in tRNA. Formation of pseudouridine at positions 38, 39 and 40 in the anticodon stem and loop of transfer RNAs. The sequence is that of tRNA pseudouridine synthase A from Clostridium kluyveri (strain ATCC 8527 / DSM 555 / NBRC 12016 / NCIMB 10680 / K1).